The following is a 401-amino-acid chain: Dual-specificity RNA methyltransferase RlmN (401 aa).

The Proton acceptor role is filled by glutamate 114. In terms of domain architecture, Radical SAM core spans 120-365 (DKGRGTLCVS…TIVRRTRGDD (246 aa)). The cysteines at positions 127 and 370 are disulfide-linked. Positions 134, 138, and 141 each coordinate [4Fe-4S] cluster. S-adenosyl-L-methionine contacts are provided by residues 187 to 188 (GE), serine 219, 241 to 243 (SLH), and asparagine 327. Cysteine 370 functions as the S-methylcysteine intermediate in the catalytic mechanism.

Belongs to the radical SAM superfamily. RlmN family. [4Fe-4S] cluster serves as cofactor.

It localises to the cytoplasm. The enzyme catalyses adenosine(2503) in 23S rRNA + 2 reduced [2Fe-2S]-[ferredoxin] + 2 S-adenosyl-L-methionine = 2-methyladenosine(2503) in 23S rRNA + 5'-deoxyadenosine + L-methionine + 2 oxidized [2Fe-2S]-[ferredoxin] + S-adenosyl-L-homocysteine. It carries out the reaction adenosine(37) in tRNA + 2 reduced [2Fe-2S]-[ferredoxin] + 2 S-adenosyl-L-methionine = 2-methyladenosine(37) in tRNA + 5'-deoxyadenosine + L-methionine + 2 oxidized [2Fe-2S]-[ferredoxin] + S-adenosyl-L-homocysteine. Functionally, specifically methylates position 2 of adenine 2503 in 23S rRNA and position 2 of adenine 37 in tRNAs. m2A2503 modification seems to play a crucial role in the proofreading step occurring at the peptidyl transferase center and thus would serve to optimize ribosomal fidelity. In Xanthomonas oryzae pv. oryzae (strain MAFF 311018), this protein is Dual-specificity RNA methyltransferase RlmN.